Here is a 211-residue protein sequence, read N- to C-terminus: Urease accessory protein UreG (211 aa).

Residue Gly11–Thr18 participates in GTP binding.

Belongs to the SIMIBI class G3E GTPase family. UreG subfamily. In terms of assembly, homodimer. UreD, UreF and UreG form a complex that acts as a GTP-hydrolysis-dependent molecular chaperone, activating the urease apoprotein by helping to assemble the nickel containing metallocenter of UreC. The UreE protein probably delivers the nickel.

It localises to the cytoplasm. Functionally, facilitates the functional incorporation of the urease nickel metallocenter. This process requires GTP hydrolysis, probably effectuated by UreG. The protein is Urease accessory protein UreG of Actinobacillus pleuropneumoniae (Haemophilus pleuropneumoniae).